Here is a 201-residue protein sequence, read N- to C-terminus: Nuclear protein UL4 (201 aa).

Belongs to the alphaherpesvirinae HHV-1 UL4 family.

It localises to the host nucleus. The sequence is that of Nuclear protein UL4 from Human herpesvirus 2 (strain HG52) (HHV-2).